Reading from the N-terminus, the 275-residue chain is N-(5'-phosphoribosyl)anthranilate isomerase 1, chloroplastic (275 aa).

The transit peptide at 1-32 directs the protein to the chloroplast; sequence MSTGISTDLHVHFGALNFSKTYKSGLSNRTVS.

Belongs to the TrpF family. As to expression, expressed in roots and shoots.

The protein resides in the plastid. It is found in the chloroplast. It catalyses the reaction N-(5-phospho-beta-D-ribosyl)anthranilate = 1-(2-carboxyphenylamino)-1-deoxy-D-ribulose 5-phosphate. It participates in amino-acid biosynthesis; L-tryptophan biosynthesis; L-tryptophan from chorismate: step 3/5. Its function is as follows. Catalyzes the conversion of 5-phosphoribosylanthranilate to l-(O-carboxyphenylamino)-l-deoxyribulose-5-phosphate, which is the third step of the tryptophan biosynthetic pathway. The protein is N-(5'-phosphoribosyl)anthranilate isomerase 1, chloroplastic (PAI1) of Arabidopsis thaliana (Mouse-ear cress).